A 119-amino-acid polypeptide reads, in one-letter code: uncharacterized protein (119 aa).

2 helical membrane passes run 61 to 80 (LISA…LLSV) and 87 to 103 (VVGV…VDII).

It is found in the membrane. This is an uncharacterized protein from Saccharomyces cerevisiae (strain ATCC 204508 / S288c) (Baker's yeast).